Reading from the N-terminus, the 447-residue chain is Multicopper oxidase mco (447 aa).

Residues 1–25 (MMNMKEDKKNTMDMKNMKHHDERKK) show a composition bias toward basic and acidic residues. Positions 1-28 (MMNMKEDKKNTMDMKNMKHHDERKKLNS) are disordered. Cu cation contacts are provided by histidine 107, histidine 109, histidine 147, histidine 149, histidine 375, histidine 378, histidine 380, histidine 428, cysteine 429, histidine 430, histidine 434, and methionine 439.

The protein belongs to the multicopper oxidase family. It depends on Cu cation as a cofactor.

The protein resides in the cytoplasm. Its function is as follows. May be involved in copper homeostasis and oxidative stress response. The chain is Multicopper oxidase mco (mco) from Staphylococcus epidermidis (strain ATCC 12228 / FDA PCI 1200).